A 140-amino-acid chain; its full sequence is Cytochrome c-type biogenesis protein CcmE (140 aa).

Over 1–7 (MTKRQNR) the chain is Cytoplasmic. Residues 8 to 28 (MVLVALLVIGVSLAGYLGLKA) traverse the membrane as a helical; Signal-anchor for type II membrane protein segment. Residues 29–140 (FNENLLYFLS…DALEKAKNKQ (112 aa)) lie on the Periplasmic side of the membrane. Heme is bound by residues His120 and Tyr124.

Belongs to the CcmE/CycJ family.

It localises to the cell inner membrane. Heme chaperone required for the biogenesis of c-type cytochromes. Transiently binds heme delivered by CcmC and transfers the heme to apo-cytochromes in a process facilitated by CcmF and CcmH. In Vesicomyosocius okutanii subsp. Calyptogena okutanii (strain HA), this protein is Cytochrome c-type biogenesis protein CcmE.